Consider the following 185-residue polypeptide: Peptide deformylase 2 (185 aa).

Fe cation is bound by residues C108 and H150. E151 is a catalytic residue. Fe cation is bound at residue H154.

Belongs to the polypeptide deformylase family. It depends on Fe(2+) as a cofactor.

The catalysed reaction is N-terminal N-formyl-L-methionyl-[peptide] + H2O = N-terminal L-methionyl-[peptide] + formate. Functionally, removes the formyl group from the N-terminal Met of newly synthesized proteins. Requires at least a dipeptide for an efficient rate of reaction. N-terminal L-methionine is a prerequisite for activity but the enzyme has broad specificity at other positions. The polypeptide is Peptide deformylase 2 (Nitrosomonas europaea (strain ATCC 19718 / CIP 103999 / KCTC 2705 / NBRC 14298)).